A 919-amino-acid chain; its full sequence is MSRFFANGSDSESESSEEEVQAPNFNKATAFQFSDDEEEVKRVVRSTKEKRYENLTAIIKSIRNHKKIRDISNTLTSFEDLTKAYQKALPVISKEENGITPRFYIRCLAELEDFINEVWEDRDGRKNLSKNNAKSLGTLRQKVRKYIKDFEDDLSRFRENPQEESENEDEEAAAHDSDGGLDAGSDIEKREPTVAATKLAKSVPSKLPVADDEDSDESIDWDPDTESETESSEDENQYQNMRERFLKRSTEKDDKDDDKRKDKRKEQKIKLRKRAEDEDGEGWETVVKGHVVEKPKMFEKDAEIDIPLVLAKLLEIMSARGKKRTDRRLQIDLLFELRDISDQHELGVPISVKIHFNIISAIFDYNQKISEPMKLEHWALLLEVMQSMMKLLLANPDIQLSESVAEEHEEYNATPYLIRGCPLAAVERLDDEFTKLLKECDPHSNDYVSRLKDEINVVKTIELVLQYFEVNGSNNERCRIYLRKVEHLYYKFDPEVFKKKRGDIPNTTQTSVDIMDRLCKFIYAKDDTDRIRTRAILTHIYHHAMHDNWFQARDLILMSHLQDNIDAADPSTRILYNRMMANLGLCAFRQENVKDAHHCLVDLMVTGKAKELLAQGLLPQRQHERSAEQEKIEKQRQMPFHMHINLELLECVYLVSAMLLEIPYIAAHEFDARRRMISKTFYQQLRSSERQSLVGPPESMREHVVAAAKAMRCGNWQACANFIVNKKMNTKVWDLFYESDRVRDMLVKFIKEESLRTYLFTYSNVYTSISIPSLAEMYELPVQKVHSIISKMIINEELMASLDDPSETVVMHRSEPSRLQALAMQFVDKVTNLVDVNEKVFDMKQGNFFQRGNMGNRGDRGYNRNQNNQGGNWGGQRRDNRNQRNRNQRGHHKNQQNQNQQQQQQHQREQQQVQTIDEE.

Positions 1-28 are disordered; sequence MSRFFANGSDSESESSEEEVQAPNFNKA. Residues 11-20 are compositionally biased toward acidic residues; it reads SESESSEEEV. Residues Ser-34, Ser-165, and Ser-177 each carry the phosphoserine modification. The disordered stretch occupies residues 154-275; sequence LSRFRENPQE…EQKIKLRKRA (122 aa). The segment covering 162–171 has biased composition (acidic residues); sequence QEESENEDEE. Over residues 210–236 the composition is skewed to acidic residues; it reads ADDEDSDESIDWDPDTESETESSEDEN. Residues 241-269 show a composition bias toward basic and acidic residues; the sequence is MRERFLKRSTEKDDKDDDKRKDKRKEQKI. One can recognise a PCI domain in the interval 640–816; that stretch reads FHMHINLELL…ETVVMHRSEP (177 aa). Positions 848-919 are disordered; the sequence is FFQRGNMGNR…QQQVQTIDEE (72 aa). Basic residues predominate over residues 883–894; sequence QRNRNQRGHHKN. Low complexity predominate over residues 895-919; that stretch reads QQNQNQQQQQQHQREQQQVQTIDEE.

Belongs to the eIF-3 subunit C family. In terms of assembly, component of the eukaryotic translation initiation factor 3 (eIF-3) complex. The eIF-3 complex interacts with pix.

It is found in the cytoplasm. Functionally, component of the eukaryotic translation initiation factor 3 (eIF-3) complex, which is involved in protein synthesis of a specialized repertoire of mRNAs and, together with other initiation factors, stimulates binding of mRNA and methionyl-tRNAi to the 40S ribosome. The eIF-3 complex specifically targets and initiates translation of a subset of mRNAs involved in cell proliferation. The chain is Eukaryotic translation initiation factor 3 subunit C from Drosophila willistoni (Fruit fly).